Consider the following 430-residue polypeptide: MTRSEALFEQAKKTIPGGVNSPVRAFNGVGGSPLFIEKANGAYIYDADGKAYIDYVGSWGPMILGHNHPKIRAAVLAAVENGLSFGAPTELEVQMAEKVISMVPSIEQVRMVSSGTEATMSAIRLARGFTNRDKILKFEGCYHGHADCLLVKAGSGALTLGQPSSPGIPEDFAKHTLTAVYNDLDSVRTLFEQYPTDISCIIIEPVAGNMNCIPPIPGFLQGLRDICDEFGALMIIDEVMTGFRVSQSGAQGYYGVTPDLTTLGKVIGGGMPVGAFGGRKDVMQFIAPTGPVYQAGTLSGNPIAMSAGLAQMEALCEEGLYEKLSAKTKRIAEGFKAAADKHGIPMAINYVGGMFGFFFTEQPEITRFDQVTQCNIEQFRIFYHGMLDEGVYLAPSAYEAGFLSMAHGEEEMRLTLEAADRVLASMKAAS.

At K265 the chain carries N6-(pyridoxal phosphate)lysine.

The protein belongs to the class-III pyridoxal-phosphate-dependent aminotransferase family. HemL subfamily. Homodimer. Pyridoxal 5'-phosphate serves as cofactor.

The protein localises to the cytoplasm. It catalyses the reaction (S)-4-amino-5-oxopentanoate = 5-aminolevulinate. Its pathway is porphyrin-containing compound metabolism; protoporphyrin-IX biosynthesis; 5-aminolevulinate from L-glutamyl-tRNA(Glu): step 2/2. The sequence is that of Glutamate-1-semialdehyde 2,1-aminomutase from Shewanella baltica (strain OS155 / ATCC BAA-1091).